The sequence spans 491 residues: Hydroxymethylglutaryl-CoA synthase (491 aa).

Glutamate 127 (proton donor/acceptor) is an active-site residue. Cysteine 159 (acyl-thioester intermediate) is an active-site residue. Cysteine 159, threonine 201, and serine 250 together coordinate (3S)-3-hydroxy-3-methylglutaryl-CoA. Residue serine 276 is modified to Phosphoserine. The Proton donor/acceptor role is filled by histidine 296. Histidine 296, lysine 305, asparagine 371, and serine 405 together coordinate (3S)-3-hydroxy-3-methylglutaryl-CoA.

It belongs to the thiolase-like superfamily. HMG-CoA synthase family.

It catalyses the reaction acetoacetyl-CoA + acetyl-CoA + H2O = (3S)-3-hydroxy-3-methylglutaryl-CoA + CoA + H(+). It functions in the pathway metabolic intermediate biosynthesis; (R)-mevalonate biosynthesis; (R)-mevalonate from acetyl-CoA: step 2/3. Its function is as follows. Hydroxymethylglutaryl-CoA synthase; part of the first module of ergosterol biosynthesis pathway that includes the early steps of the pathway, conserved across all eukaryotes, and which results in the formation of mevalonate from acetyl-coenzyme A (acetyl-CoA). ERG13 condenses acetyl-CoA with acetoacetyl-CoA to form hydroxymethylglutaryl-CoA (HMG-CoA). The first module starts with the action of the cytosolic acetyl-CoA acetyltransferase ERG10 that catalyzes the formation of acetoacetyl-CoA. The hydroxymethylglutaryl-CoA synthase ERG13 then condenses acetyl-CoA with acetoacetyl-CoA to form HMG-CoA. The rate-limiting step of the early module is the reduction to mevalonate by the 3-hydroxy-3-methylglutaryl-coenzyme A (HMG-CoA) reductases HMG1 and HMG2 which are derived from a single ancestral HMGR gene by gene duplication. The protein is Hydroxymethylglutaryl-CoA synthase of Saccharomyces cerevisiae (strain ATCC 204508 / S288c) (Baker's yeast).